The following is a 579-amino-acid chain: DNA ligase 1 (579 aa).

ATP is bound at residue E244. Catalysis depends on K246, which acts as the N6-AMP-lysine intermediate. ATP contacts are provided by R251, R266, E296, F342, R419, and K425.

This sequence belongs to the ATP-dependent DNA ligase family. Requires Mg(2+) as cofactor.

It carries out the reaction ATP + (deoxyribonucleotide)n-3'-hydroxyl + 5'-phospho-(deoxyribonucleotide)m = (deoxyribonucleotide)n+m + AMP + diphosphate.. In terms of biological role, DNA ligase that seals nicks in double-stranded DNA during DNA replication, DNA recombination and DNA repair. This chain is DNA ligase 1, found in Methanosarcina mazei (strain ATCC BAA-159 / DSM 3647 / Goe1 / Go1 / JCM 11833 / OCM 88) (Methanosarcina frisia).